Here is a 313-residue protein sequence, read N- to C-terminus: Acetaldehyde dehydrogenase (313 aa).

13–16 is an NAD(+) binding site; that stretch reads SGNI. C133 acts as the Acyl-thioester intermediate in catalysis. Residues 164-172 and N291 contribute to the NAD(+) site; that span reads SAGPGTRAN.

Belongs to the acetaldehyde dehydrogenase family.

It carries out the reaction acetaldehyde + NAD(+) + CoA = acetyl-CoA + NADH + H(+). This is Acetaldehyde dehydrogenase from Cupriavidus pinatubonensis (strain JMP 134 / LMG 1197) (Cupriavidus necator (strain JMP 134)).